Consider the following 137-residue polypeptide: Putative FERT-1 protein (137 aa).

This Ascaris suum (Pig roundworm) protein is Putative FERT-1 protein (FERT-1).